A 262-amino-acid polypeptide reads, in one-letter code: Small ribosomal subunit protein eS1 (262 aa).

It belongs to the eukaryotic ribosomal protein eS1 family. As to quaternary structure, component of the small ribosomal subunit. Mature ribosomes consist of a small (40S) and a large (60S) subunit. The 40S subunit contains about 33 different proteins and 1 molecule of RNA (18S). The 60S subunit contains about 49 different proteins and 3 molecules of RNA (25S, 5.8S and 5S).

It localises to the cytoplasm. This Cryptosporidium hominis protein is Small ribosomal subunit protein eS1.